The following is a 558-amino-acid chain: MRSDAIKKGHLRAPNRSLLRACGLKDEDFDKPFIGVANSYIDIIPGHYFLNDYAKIIKDEIRKNGCVPFEFNTIGVDDGIAMGHEGMLYSLPSRELIANSIETVMNAHQLDALICIPNCDKITPGMLMGALRVNVPTIFVSGGPMASGVTKKGEKISLSSVFEAVGAYESKKISEEEFKDIECSACPSGGSCSGMFTANSMNTLCEAMGIALEGNGTILALSKEREELLRKAARRICEIALDERFKIRNIITQKAVRNAMVVDMAMGGSSNTVLHMLAISREAGVALDIKDLNFISSKVAHIAKIAPSLNSVYMDDIHKAGGVSAVMAEISSRQGHILELDALTITGESLKERLKNAKIKDENIIRKVDNAYSKVGGLAILFGNLAKQGCVIKTAGIIGERKFKGKAVCFNSQDEAIKGIIKGKVQKGNVCVIRYEGPKGGPGMQEMLSPTSLLMGMGLGADVALITDGRFSGATRGLSVGHISPEAAEGGLIGLLKDGDEIEIDVDAYTIHANVSEEEIAKRKKEFALPQKEVSSRWLRMYQKLVSNASKGAVLDME.

Position 78 (Asp78) interacts with Mg(2+). Cys119 lines the [2Fe-2S] cluster pocket. Residues Asp120 and Lys121 each coordinate Mg(2+). Lys121 carries the N6-carboxylysine modification. Residue Cys192 coordinates [2Fe-2S] cluster. Glu446 contributes to the Mg(2+) binding site. Ser472 (proton acceptor) is an active-site residue.

Belongs to the IlvD/Edd family. As to quaternary structure, homodimer. [2Fe-2S] cluster is required as a cofactor. Mg(2+) serves as cofactor.

The catalysed reaction is (2R)-2,3-dihydroxy-3-methylbutanoate = 3-methyl-2-oxobutanoate + H2O. The enzyme catalyses (2R,3R)-2,3-dihydroxy-3-methylpentanoate = (S)-3-methyl-2-oxopentanoate + H2O. The protein operates within amino-acid biosynthesis; L-isoleucine biosynthesis; L-isoleucine from 2-oxobutanoate: step 3/4. It functions in the pathway amino-acid biosynthesis; L-valine biosynthesis; L-valine from pyruvate: step 3/4. Its function is as follows. Functions in the biosynthesis of branched-chain amino acids. Catalyzes the dehydration of (2R,3R)-2,3-dihydroxy-3-methylpentanoate (2,3-dihydroxy-3-methylvalerate) into 2-oxo-3-methylpentanoate (2-oxo-3-methylvalerate) and of (2R)-2,3-dihydroxy-3-methylbutanoate (2,3-dihydroxyisovalerate) into 2-oxo-3-methylbutanoate (2-oxoisovalerate), the penultimate precursor to L-isoleucine and L-valine, respectively. The protein is Dihydroxy-acid dehydratase of Campylobacter jejuni subsp. jejuni serotype O:2 (strain ATCC 700819 / NCTC 11168).